The primary structure comprises 148 residues: Putative adenylate kinase (148 aa).

Residues Gly9, Gly11, Lys12, Ser13, and Thr14 each coordinate ATP. Residues 28–44 form an NMP region; that stretch reads EGNALAVKYGCLSGDEV. Residues 91-101 form an LID region; the sequence is DRGYSPEKIDE. Arg92 provides a ligand contact to ATP.

It belongs to the adenylate kinase family. AK6 subfamily. Interacts with uS11. Not a structural component of 40S pre-ribosomes, but transiently interacts with them by binding to uS11.

It catalyses the reaction AMP + ATP = 2 ADP. The enzyme catalyses ATP + H2O = ADP + phosphate + H(+). Functionally, broad-specificity nucleoside monophosphate (NMP) kinase that catalyzes the reversible transfer of the terminal phosphate group between nucleoside triphosphates and monophosphates. Also has ATPase activity. Involved in the late maturation steps of the 30S ribosomal particles, specifically 16S rRNA maturation. While NMP activity is not required for ribosome maturation, ATPase activity is. Associates transiently with small ribosomal subunit protein uS11. ATP hydrolysis breaks the interaction with uS11. May temporarily remove uS11 from the ribosome to enable a conformational change of the ribosomal RNA that is needed for the final maturation step of the small ribosomal subunit. In Thermoplasma acidophilum (strain ATCC 25905 / DSM 1728 / JCM 9062 / NBRC 15155 / AMRC-C165), this protein is Putative adenylate kinase.